Reading from the N-terminus, the 457-residue chain is MSAGKIVQIIGAVIDVEFPQDAVPKVYDALKVESGLTLEVQQQLGGGVVRCIALGTSDGLKRGLKVENTNNPIQVPVGTKTLGRIMNVLGEPIDEQGAIGEEERWAIHRSAPSYEEQSNSTELLETGIKVIDLICPFAKGGKVGLFGGAGVGKTVNMMELIRNIAIEHSGYSVFAGVGERTREGNDFYHEMKDSNVLDKVSLVYGQMNEPPGNRLRVALTGLTMAEKFRDEGRDVLFFVDNIYRYTLAGTEVSALLGRMPSAVGYQPTLAEEMGVLQERITSTKTGSITSVQAVYVPADDLTDPSPATTFAHLDSTVVLSRQIASLGIYPAVDPLDSTSRQLDPLVVGQEHYDVARGVQGILQRYKELKDIIAILGMDELSEEDKLVVARARKIERFLSQPFFVAEVFTGSPGKYVTLKDTIRGFKGILDGEYDHIPEQAFYMVGSIDEVLEKAKNM.

147–154 (GGAGVGKT) is an ATP binding site.

The protein belongs to the ATPase alpha/beta chains family. In terms of assembly, F-type ATPases have 2 components, CF(1) - the catalytic core - and CF(0) - the membrane proton channel. CF(1) has five subunits: alpha(3), beta(3), gamma(1), delta(1), epsilon(1). CF(0) has three main subunits: a(1), b(2) and c(9-12). The alpha and beta chains form an alternating ring which encloses part of the gamma chain. CF(1) is attached to CF(0) by a central stalk formed by the gamma and epsilon chains, while a peripheral stalk is formed by the delta and b chains.

Its subcellular location is the cell inner membrane. The catalysed reaction is ATP + H2O + 4 H(+)(in) = ADP + phosphate + 5 H(+)(out). Its function is as follows. Produces ATP from ADP in the presence of a proton gradient across the membrane. The catalytic sites are hosted primarily by the beta subunits. The protein is ATP synthase subunit beta of Haemophilus influenzae (strain 86-028NP).